A 147-amino-acid chain; its full sequence is Large ribosomal subunit protein uL13 (147 aa).

This sequence belongs to the universal ribosomal protein uL13 family. Part of the 50S ribosomal subunit.

In terms of biological role, this protein is one of the early assembly proteins of the 50S ribosomal subunit, although it is not seen to bind rRNA by itself. It is important during the early stages of 50S assembly. The chain is Large ribosomal subunit protein uL13 from Polaromonas naphthalenivorans (strain CJ2).